The chain runs to 1201 residues: Zinc finger protein sdc-1 (1201 aa).

7 C2H2-type zinc fingers span residues 117-139 (LTCA…RGVH), 145-168 (YMCQ…RTSC), 233-254 (SSCH…GNVH), 268-290 (YFCH…WRLH), 486-513 (IVCH…LLRH), 521-543 (YHCA…INDC), and 652-674 (VVCF…DYCH). Residues 1164-1201 (KRRNSETREHELIELDTDDLNEPSTSDGRYSFGHHGYR) are disordered. The span at 1167–1176 (NSETREHELI) shows a compositional bias: basic and acidic residues.

In terms of assembly, component of the SDC complex, which consists of sdc-1, sdc-2 and sdc-3. Within the complex, interacts with sdc-2 and sdc-3.

It is found in the nucleus. The protein localises to the chromosome. Its function is as follows. Embryonic transcription factor regulating downstream genes involved specifically in the sex determination and dosage compensation pathways, or regulating other genes involved in the coordinate control of both processes. Component of the SDC complex that functions in sex determination and in X chromosome dosage compensation specifically in hermaphrodite (XX) animals. Involved in the recruitment of the condensin I-like dosage compensation complex to the male sex-determining autosomal gene her-1, thereby contributing to its repression and initiating hermaphrodite sexual development. Similarly, might contribute to X-linked gene repression through recruitment of the dosage compensation complex to the X chromosomes in hermaphrodites. Seems to be involved in the depletion of histone H4 lysine 16 acetylation (H4K16ac) on dosage compensated X chromosomes. Plays a role in developmental rate and body fat regulation downstream of the TOR complex 2 pathway. In Caenorhabditis elegans, this protein is Zinc finger protein sdc-1 (sdc-1).